We begin with the raw amino-acid sequence, 122 residues long: Large ribosomal subunit protein uL14c (122 aa).

Belongs to the universal ribosomal protein uL14 family. In terms of assembly, part of the 50S ribosomal subunit.

Its subcellular location is the plastid. It is found in the chloroplast. Its function is as follows. Binds to 23S rRNA. In Gnetum parvifolium (Small-leaved jointfir), this protein is Large ribosomal subunit protein uL14c.